The sequence spans 420 residues: Gamma-glutamyl phosphate reductase (420 aa).

This sequence belongs to the gamma-glutamyl phosphate reductase family.

It is found in the cytoplasm. The catalysed reaction is L-glutamate 5-semialdehyde + phosphate + NADP(+) = L-glutamyl 5-phosphate + NADPH + H(+). Its pathway is amino-acid biosynthesis; L-proline biosynthesis; L-glutamate 5-semialdehyde from L-glutamate: step 2/2. Functionally, catalyzes the NADPH-dependent reduction of L-glutamate 5-phosphate into L-glutamate 5-semialdehyde and phosphate. The product spontaneously undergoes cyclization to form 1-pyrroline-5-carboxylate. This is Gamma-glutamyl phosphate reductase from Neisseria meningitidis serogroup C (strain 053442).